The primary structure comprises 254 residues: Geranylgeranylglyceryl phosphate synthase (254 aa).

Residues Asp-28 and Ser-57 each coordinate Mg(2+). Sn-glycerol 1-phosphate is bound by residues Tyr-176–Gly-182, Gly-207–Gly-208, and Gly-229–Thr-230.

Belongs to the GGGP/HepGP synthase family. Group II subfamily. Requires Mg(2+) as cofactor.

It localises to the cytoplasm. It catalyses the reaction sn-glycerol 1-phosphate + (2E,6E,10E)-geranylgeranyl diphosphate = sn-3-O-(geranylgeranyl)glycerol 1-phosphate + diphosphate. It functions in the pathway membrane lipid metabolism; glycerophospholipid metabolism. Its function is as follows. Prenyltransferase that catalyzes the transfer of the geranylgeranyl moiety of geranylgeranyl diphosphate (GGPP) to the C3 hydroxyl of sn-glycerol-1-phosphate (G1P). This reaction is the first ether-bond-formation step in the biosynthesis of archaeal membrane lipids. The chain is Geranylgeranylglyceryl phosphate synthase from Pyrococcus horikoshii (strain ATCC 700860 / DSM 12428 / JCM 9974 / NBRC 100139 / OT-3).